A 505-amino-acid polypeptide reads, in one-letter code: MGQKAKAQAPTTHPRPHTLSSQVAPALPRRPRHAAPESLRQARGEVMKAHLITYGCQMNEYDTHLVQSQLVSFGADIVESPDEADFVLVNTCAVRGKPVDKVRSLLGDLRKQKAQRSLVVGMMGCLAQLEEGQQIARKFEVDVLLGPGSLLDIGAALESNERFWGLQFKDELHDHIPPPPSGKLQAHLTIMRGCDHHCTYCIVPTTRGPQVSRHPDDILRELDMQLAAGVREVTLLGQNVNAYGVDQGAKLKGYPSFADLLRMVGASGIERVKFTTSHPMNFTEDVAAAIGETPAICEFVHLPVQSGSDRVLRRMAREYNREKYLTHIAQIKKHIPDVVLATDIIVGFPGETEEDFQDTLSLYDEVGYDSAYMFIYSPRPGTPSYKHFQDLPRELKTERLQRLIARQKDWSARKNAQKVGTVQQVLLRGDAHDAGFLEGHTRGNHPTVVPKAIGADGAGVYQVRIDHATPHMMYGHILGPDGQPLPEQPRFNPEAAAVGGALPML.

A disordered region spans residues 1–39 (MGQKAKAQAPTTHPRPHTLSSQVAPALPRRPRHAAPESL). One can recognise an MTTase N-terminal domain in the interval 47–162 (MKAHLITYGC…IGAALESNER (116 aa)). Cysteine 56, cysteine 92, cysteine 125, cysteine 194, cysteine 198, and cysteine 201 together coordinate [4Fe-4S] cluster. One can recognise a Radical SAM core domain in the interval 180 to 413 (PSGKLQAHLT…IARQKDWSAR (234 aa)). In terms of domain architecture, TRAM spans 416–479 (AQKVGTVQQV…PHMMYGHILG (64 aa)).

It belongs to the methylthiotransferase family. MiaB subfamily. Monomer. [4Fe-4S] cluster serves as cofactor.

It is found in the cytoplasm. The enzyme catalyses N(6)-dimethylallyladenosine(37) in tRNA + (sulfur carrier)-SH + AH2 + 2 S-adenosyl-L-methionine = 2-methylsulfanyl-N(6)-dimethylallyladenosine(37) in tRNA + (sulfur carrier)-H + 5'-deoxyadenosine + L-methionine + A + S-adenosyl-L-homocysteine + 2 H(+). Functionally, catalyzes the methylthiolation of N6-(dimethylallyl)adenosine (i(6)A), leading to the formation of 2-methylthio-N6-(dimethylallyl)adenosine (ms(2)i(6)A) at position 37 in tRNAs that read codons beginning with uridine. The chain is tRNA-2-methylthio-N(6)-dimethylallyladenosine synthase from Deinococcus radiodurans (strain ATCC 13939 / DSM 20539 / JCM 16871 / CCUG 27074 / LMG 4051 / NBRC 15346 / NCIMB 9279 / VKM B-1422 / R1).